We begin with the raw amino-acid sequence, 1114 residues long: MTISDKIRIYELSRDLNLENKDILDAAQKLSISVKSHSSSISAEEAKKIKNLINKKNSDKKILSINKPSIKKDNFKQNKSPSISSKKETPLKDNSNKKPLLIKPLNKPESVKIISNQLQNSNKPNIVNTSQSRANLTNTNINSKTSQNLNQDKKTFENNITPPIKSPAKPPIQLIAKPKNINNNVKSNESSQNISSAGDNRRLSNKPDQNTNKPKTKNYDSKIKTPELVGAPIRREDPKINPNKQNNKQNIAFKQTGSNRIGSPNRPGMPNNRPGLRNKPSDQGRPGSFNRQGNPNRPGMPNNRPGLRNKPSDQGRHGSFNRQGNPNRPGMPNNRPGSKFNGQNSSGIRKPVSPNELLQLQKNNNSEKDNKDKNNNAKQNINGPNQKAKAPNMRPNATPSSKKPPHRAFSNSSKKPGKTDWDDSAKLEALRSKNPQKQRQKVHIIGENDDSLTSETSGYSGEKISILSASLARPKKEKSEETKSQKSIKQFKKKKKETTRQRQKRRAMELKAAKEAKQVRPEMIIVPEDNLTVQELADKLSLESSEIIKSLFFKGITATVTQSLDLATIETVAEEFGVPVLQDDIQEAAEKTVDMIESDDIDNLIRRPPVITVMGHVDHGKTSLLDSIRESRVASGEAGGITQHIGAYQVEFEHESQKKKLTFLDTPGHEAFTAMRARGTKVTDVAVLVVAADDGCRPQTLEAISHARAAKVPIVVAINKIDKEGASPDRVKQELSEKDLIAEDWGGDTVMVPVSAIKKQNIDKLLEMILLVSEVEDLQANPDRFAKGTVIEAHLDKAKGPVATLLVQNGTLKSGDVLAAGSVLGKIRAMVDEHGNRIKEAGPSFPVEALGFSEVPTAGDEFEVYPDEKAGRAIVGERATDARATKLAQQMASRRVSLSSLSTQANDGELKELNLILKADVQGSVEAILGSLEQLPKNEVQVRVLFSAPGEITETDIDLAAASGSVIIGFNTSLASGAKRAADANDVDIREYEVIYKLLEDIQLAMEGLLEPDLVEESLGQAEVRATFSVGKGAIAGCYIQTGKLQRNCSLRVIRSEKVIFEGNLDSLKRAKDDVKEVNTGFECGVGCDKFSSWIEGDVIEAFKFVTKKRTLSQ.

2 disordered regions span residues 69–102 and 181–507; these read SIKK…PLLI and INNN…KRRA. Residues 85-96 are compositionally biased toward basic and acidic residues; sequence SKKETPLKDNSN. Over residues 181-198 the composition is skewed to polar residues; the sequence is INNNVKSNESSQNISSAG. Positions 240-251 are enriched in low complexity; sequence INPNKQNNKQNI. The span at 252–261 shows a compositional bias: polar residues; the sequence is AFKQTGSNRI. 3 stretches are compositionally biased toward low complexity: residues 262–278, 290–309, and 321–337; these read GSPN…GLRN, NRQG…GLRN, and NRQG…NRPG. Residues 365 to 375 show a composition bias toward basic and acidic residues; it reads NSEKDNKDKNN. A compositionally biased stretch (low complexity) spans 376–385; the sequence is NAKQNINGPN. Residues 417-431 show a composition bias toward basic and acidic residues; sequence GKTDWDDSAKLEALR. The segment covering 489–505 has biased composition (basic residues); the sequence is KQFKKKKKETTRQRQKR. Residues 606–778 enclose the tr-type G domain; it reads RRPPVITVMG…ILLVSEVEDL (173 aa). Positions 615–622 are G1; that stretch reads GHVDHGKT. 615–622 is a binding site for GTP; it reads GHVDHGKT. Positions 640–644 are G2; it reads GITQH. Positions 665–668 are G3; the sequence is DTPG. GTP is bound by residues 665–669 and 719–722; these read DTPGH and NKID. Residues 719 to 722 form a G4 region; it reads NKID. Residues 755–757 form a G5 region; sequence SAI.

Belongs to the TRAFAC class translation factor GTPase superfamily. Classic translation factor GTPase family. IF-2 subfamily.

It localises to the cytoplasm. Functionally, one of the essential components for the initiation of protein synthesis. Protects formylmethionyl-tRNA from spontaneous hydrolysis and promotes its binding to the 30S ribosomal subunits. Also involved in the hydrolysis of GTP during the formation of the 70S ribosomal complex. This is Translation initiation factor IF-2 from Prochlorococcus marinus (strain MIT 9301).